A 207-amino-acid chain; its full sequence is Keratin-associated protein 27-1 (207 aa).

A disordered region spans residues Gln-184–Lys-207.

This sequence belongs to the PMG family. Interacts with hair keratins.

Its function is as follows. In the hair cortex, hair keratin intermediate filaments are embedded in an interfilamentous matrix, consisting of hair keratin-associated proteins (KRTAP), which are essential for the formation of a rigid and resistant hair shaft through their extensive disulfide bond cross-linking with abundant cysteine residues of hair keratins. The matrix proteins include the high-sulfur and high-glycine-tyrosine keratins. The polypeptide is Keratin-associated protein 27-1 (KRTAP27-1) (Homo sapiens (Human)).